We begin with the raw amino-acid sequence, 688 residues long: Amino-acid acetyltransferase, mitochondrial (688 aa).

Residues 1–45 (MSSRALTWPRTAKSSLLKQQTSSFVGQPKLGTPNCRSFSSTADRP) constitute a mitochondrion transit peptide. Disordered regions lie at residues 1–59 (MSSR…SKSY) and 96–119 (LKAQ…TVTQ). Composition is skewed to polar residues over residues 12 to 25 (AKSS…SSFV), 34 to 57 (NCRS…SSSK), and 106 to 119 (TEPT…TVTQ). One can recognise an N-acetyltransferase domain in the interval 509–678 (NRPRLSLDDP…YEQVCRSIQP (170 aa)).

This sequence belongs to the acetyltransferase family.

It is found in the mitochondrion. It catalyses the reaction L-glutamate + acetyl-CoA = N-acetyl-L-glutamate + CoA + H(+). It functions in the pathway amino-acid biosynthesis; L-arginine biosynthesis; N(2)-acetyl-L-ornithine from L-glutamate: step 1/4. Functionally, N-acetylglutamate synthase involved in arginine biosynthesis. The chain is Amino-acid acetyltransferase, mitochondrial (arg2) from Aspergillus flavus (strain ATCC 200026 / FGSC A1120 / IAM 13836 / NRRL 3357 / JCM 12722 / SRRC 167).